A 405-amino-acid polypeptide reads, in one-letter code: Potassium channel subfamily K member 13 (405 aa).

Topologically, residues 1–19 are cytoplasmic; sequence MAGRGCSCSPGHLNEDNAR. The helical transmembrane segment at 20–40 threads the bilayer; the sequence is FLLLAGLILLYLLGGAAVFSA. 2 N-linked (GlcNAc...) asparagine glycosylation sites follow: Asn-59 and Asn-65. Positions 95 to 115 form an intramembrane region, pore-forming; it reads WDFTGAFYFVGTVVTTIGFGM. Residues Thr-110, Ile-111, and Gly-112 each coordinate K(+). Positions 110–115 are selectivity filter 1; that stretch reads TIGFGM. Residues 125-145 traverse the membrane as a helical segment; sequence VFLIFYGLIGCASTILFFNLF. Residues 146–193 are Cytoplasmic-facing; sequence LERLITVIAYVMRTCHHQQLRRRGTVARDNRKAPRKGEADSLAGWKPS. The chain crosses the membrane as a helical span at residues 194-214; the sequence is VYYVMLILCLASVAISCGASA. Positions 224 to 244 form an intramembrane region, pore-forming; it reads YFDSVYFCFVASSTIGFGDLV. The K(+) site is built by Thr-237, Ile-238, Gly-239, and Phe-240. The interval 237 to 242 is selectivity filter 2; the sequence is TIGFGD. A helical transmembrane segment spans residues 263-283; sequence FFILMGVCCIYSMFNVISILI. At 284 to 405 the chain is on the cytoplasmic side; the sequence is KQTVNWILRK…NRLAETSGDR (122 aa).

This sequence belongs to the two pore domain potassium channel (TC 1.A.1.8) family. As to quaternary structure, homodimer. Heterodimer with KCNK12. As to expression, ubiquitous. In brain expression is rather low and restricted to the olfactory bulb and tubercle, to the ventromedial hypothalamic nucleus, lateral septal nucleus dorsal, lateral mammillary nucleus, lateral parabrachial nuclei, reticular nucleus and reunions nuclei.

The protein localises to the cell membrane. The enzyme catalyses K(+)(in) = K(+)(out). With respect to regulation, the channel currents are activated by arachidonic acid, inhibited by volatile anesthetic halothane, partially inhibited by Ba(2+) ions and only weakly inhibited by extracellular acidification to pH 6. Its function is as follows. K(+) channel that conducts outward rectifying tonic currents potentiated by purinergic signals. Homo- and heterodimerizes to form functional channels with distinct regulatory and gating properties. Contributes most of K(+) currents at the plasma membrane of resting microglia. Maintains a depolarized membrane potential required for proper ramified microglia morphology and phagocytosis, selectively mediating microglial pruning of presynaptic compartments at hippocampal excitatory synapses. Upon local release of ATP caused by neuronal injury or infection, it is potentiated by P2RY12 and P2RX7 receptor signaling and contributes to ATP-triggered K(+) efflux underlying microglial NLRP3 inflammasome assembly and IL1B release. This is Potassium channel subfamily K member 13 from Rattus norvegicus (Rat).